Consider the following 89-residue polypeptide: Protein YihD (89 aa).

This sequence to H.influenzae HI_0845.

This is Protein YihD (yihD) from Escherichia coli O157:H7.